We begin with the raw amino-acid sequence, 183 residues long: ATP synthase subunit delta (183 aa).

Belongs to the ATPase delta chain family. As to quaternary structure, F-type ATPases have 2 components, F(1) - the catalytic core - and F(0) - the membrane proton channel. F(1) has five subunits: alpha(3), beta(3), gamma(1), delta(1), epsilon(1). F(0) has three main subunits: a(1), b(2) and c(10-14). The alpha and beta chains form an alternating ring which encloses part of the gamma chain. F(1) is attached to F(0) by a central stalk formed by the gamma and epsilon chains, while a peripheral stalk is formed by the delta and b chains.

The protein resides in the cell membrane. In terms of biological role, f(1)F(0) ATP synthase produces ATP from ADP in the presence of a proton or sodium gradient. F-type ATPases consist of two structural domains, F(1) containing the extramembraneous catalytic core and F(0) containing the membrane proton channel, linked together by a central stalk and a peripheral stalk. During catalysis, ATP synthesis in the catalytic domain of F(1) is coupled via a rotary mechanism of the central stalk subunits to proton translocation. Functionally, this protein is part of the stalk that links CF(0) to CF(1). It either transmits conformational changes from CF(0) to CF(1) or is implicated in proton conduction. The polypeptide is ATP synthase subunit delta (Oenococcus oeni (strain ATCC BAA-331 / PSU-1)).